Here is a 237-residue protein sequence, read N- to C-terminus: tRNA (guanine-N(7)-)-methyltransferase (237 aa).

Glu67, Glu92, Asp119, and Asp141 together coordinate S-adenosyl-L-methionine. Asp141 is an active-site residue. Residues Lys145, Asp177, and 214–217 (TRYE) contribute to the substrate site.

Belongs to the class I-like SAM-binding methyltransferase superfamily. TrmB family.

The catalysed reaction is guanosine(46) in tRNA + S-adenosyl-L-methionine = N(7)-methylguanosine(46) in tRNA + S-adenosyl-L-homocysteine. The protein operates within tRNA modification; N(7)-methylguanine-tRNA biosynthesis. Catalyzes the formation of N(7)-methylguanine at position 46 (m7G46) in tRNA. In Jannaschia sp. (strain CCS1), this protein is tRNA (guanine-N(7)-)-methyltransferase.